Consider the following 530-residue polypeptide: tRNA-2-methylthio-N(6)-dimethylallyladenosine synthase (530 aa).

Residues 19–134 form the MTTase N-terminal domain; it reads RTYEVRTYGC…LPTLLERARH (116 aa). Cysteine 28, cysteine 63, cysteine 97, cysteine 171, cysteine 175, and cysteine 178 together coordinate [4Fe-4S] cluster. One can recognise a Radical SAM core domain in the interval 157-387; the sequence is RDEIASGWVS…TALQERISHE (231 aa). Residues 390–460 form the TRAM domain; that stretch reads QRVVGRTVEV…PFHLIADSVD (71 aa). Residues 509 to 530 are disordered; it reads VPTTASTSAPVGDGSAHPRHRA.

Belongs to the methylthiotransferase family. MiaB subfamily. As to quaternary structure, monomer. [4Fe-4S] cluster serves as cofactor.

Its subcellular location is the cytoplasm. The enzyme catalyses N(6)-dimethylallyladenosine(37) in tRNA + (sulfur carrier)-SH + AH2 + 2 S-adenosyl-L-methionine = 2-methylsulfanyl-N(6)-dimethylallyladenosine(37) in tRNA + (sulfur carrier)-H + 5'-deoxyadenosine + L-methionine + A + S-adenosyl-L-homocysteine + 2 H(+). Functionally, catalyzes the methylthiolation of N6-(dimethylallyl)adenosine (i(6)A), leading to the formation of 2-methylthio-N6-(dimethylallyl)adenosine (ms(2)i(6)A) at position 37 in tRNAs that read codons beginning with uridine. This is tRNA-2-methylthio-N(6)-dimethylallyladenosine synthase from Clavibacter sepedonicus (Clavibacter michiganensis subsp. sepedonicus).